A 365-amino-acid chain; its full sequence is tRNA 2-selenouridine synthase (365 aa).

A Rhodanese domain is found at 12 to 136; that stretch reads FLHDVPLLDV…LRMFLIDTTQ (125 aa). The active-site S-selanylcysteine intermediate is C95.

Belongs to the SelU family. Monomer.

The enzyme catalyses 5-methylaminomethyl-2-thiouridine(34) in tRNA + selenophosphate + (2E)-geranyl diphosphate + H2O + H(+) = 5-methylaminomethyl-2-selenouridine(34) in tRNA + (2E)-thiogeraniol + phosphate + diphosphate. It carries out the reaction 5-methylaminomethyl-2-thiouridine(34) in tRNA + (2E)-geranyl diphosphate = 5-methylaminomethyl-S-(2E)-geranyl-thiouridine(34) in tRNA + diphosphate. The catalysed reaction is 5-methylaminomethyl-S-(2E)-geranyl-thiouridine(34) in tRNA + selenophosphate + H(+) = 5-methylaminomethyl-2-(Se-phospho)selenouridine(34) in tRNA + (2E)-thiogeraniol. It catalyses the reaction 5-methylaminomethyl-2-(Se-phospho)selenouridine(34) in tRNA + H2O = 5-methylaminomethyl-2-selenouridine(34) in tRNA + phosphate. Its function is as follows. Involved in the post-transcriptional modification of the uridine at the wobble position (U34) of tRNA(Lys), tRNA(Glu) and tRNA(Gln). Catalyzes the conversion of 2-thiouridine (S2U-RNA) to 2-selenouridine (Se2U-RNA). Acts in a two-step process involving geranylation of 2-thiouridine (S2U) to S-geranyl-2-thiouridine (geS2U) and subsequent selenation of the latter derivative to 2-selenouridine (Se2U) in the tRNA chain. In Verminephrobacter eiseniae (strain EF01-2), this protein is tRNA 2-selenouridine synthase.